Consider the following 591-residue polypeptide: NADPH oxidase 1 (591 aa).

Over 1–36 (MAGELRGSRGPLQRIQIAPREAPNLHLTMGNWLVNH) the chain is Cytoplasmic. The chain crosses the membrane as a helical span at residues 37 to 59 (WLSVLFLVSWLGLNIFLFVYAFL). The Extracellular segment spans residues 60-72 (NYEKSDKYYYTRE). The chain crosses the membrane as a helical span at residues 73-97 (ILGTALALARASALCLNFNSMMILI). Residues 82–316 (RASALCLNFN…YIFERILRFY (235 aa)) enclose the Ferric oxidoreductase domain. Topologically, residues 98 to 130 (PVCRNLLSFLRGTCSFCNRTLRKPLDHNLTFHK) are cytoplasmic. The heme site is built by His129 and His143. The chain crosses the membrane as a helical span at residues 131 to 151 (LVAYMICIFTVIHIIAHLFNF). Over 152 to 195 (ERYRRSQQAMDGSLASVLSSLSHPEKEDSWLNPIQSPNMTVMYA) the chain is Extracellular. The N-linked (GlcNAc...) asparagine glycan is linked to Asn189. The chain crosses the membrane as a helical span at residues 196 to 216 (AFTSIAGLTGVIATVALVLMV). Topologically, residues 217-234 (TSAMEFIRRNYFELFWYT) are cytoplasmic. Residues 235 to 255 (HHLFIVYIICLGIHGLGGIVR) form a helical membrane-spanning segment. Residues His236 and His248 each contribute to the heme site. Topologically, residues 256–423 (GQTEESLGES…TVSEDVFQYE (168 aa)) are extracellular. N-linked (GlcNAc...) asparagine glycosylation occurs at Asn269. The 102-residue stretch at 317-418 (RSQQKVVITK…DGPFGTVSED (102 aa)) folds into the FAD-binding FR-type domain. FAD is bound at residue 365-371 (HPFTLTS). A helical transmembrane segment spans residues 424 to 444 (VAVLVGAGIGVTPFASILKSI). An interaction with NOXO1 region spans residues 424–563 (VAVLVGAGIG…GVFLCGPRTL (140 aa)). The Cytoplasmic portion of the chain corresponds to 445–591 (WYKFQRADNK…VQFYFNKETF (147 aa)). The residue at position 457 (Thr457) is a Phosphothreonine.

NOX1, NOXA1, NOXO1, RAC1 and CYBA forms a functional multimeric complex supporting ROS production. Interacts with NOXO1. Interacts (via FAD-binding FR-type domain) with ARHGEF7 (via PH domain). Interacts with NOXA1. Requires FAD as cofactor. In terms of processing, phosphorylation at Thr-457 mediated by PKC/PRKBC positively regulates its interaction with NOXA1 and enzyme activity. Expressed in colon and vascular smooth muscle cells (VSMC).

The protein resides in the cell projection. Its subcellular location is the invadopodium membrane. The protein localises to the cell membrane. It carries out the reaction NADPH + 2 O2 = 2 superoxide + NADP(+) + H(+). Its activity is regulated as follows. The oxidase activity is potentiated by NOXA1 and NOXO1. NADPH oxidase that catalyzes the generation of superoxide from molecular oxygen utilizing NADPH as an electron donor. This chain is NADPH oxidase 1 (Nox1), found in Mus musculus (Mouse).